Consider the following 493-residue polypeptide: MENLEQTCASLRAQIAATEAQLAGLKRELEIAEQAAEVKAQSTTRTITAEDGKTNETREWPLLSEEYKRYGRQMIVPQLGLQGQLKLRAARVLIVGAGGLGCPAALYLAGAGVGTLGLVDGDTVENSNLHRQVLHSSKNVGTFKVDSAIEYLRELNPHPTYVPYRAHLTPQEAPGIFKDYDIVLDCTDNPATRYLISDTAVLLGKPLVSASALRTEGQLMVLNYPPRPVGDKSGGPCYRCVFPKPPPANSVVSCADGGILGPVVGTMGVLQALEAIKVITSPAVNPSASPPSLLIFSAYSTPLFRTIRLRARRANCAVCSADASVTLETLKNGSTDYVFFCGVAGLEATLSPEERISPLEFKKRHPKEVPQDGGRINKEPTIIDVREKVQFDICSLENSINIPISTILSSASSPTNVDANAQPSLPFWLPRELASADSTDPIYVVCRHGNDSQIAVRRLKELGLDRGGQRYVGDIQGGLRAWREQIDPDWPEY.

ATP is bound by residues Gly-99, Asp-120, 127-131 (SNLHR), Lys-144, and 188-189 (DN). Cys-237 and Cys-240 together coordinate Zn(2+). Catalysis depends on Cys-254, which acts as the Glycyl thioester intermediate; for adenylyltransferase activity. Zn(2+) contacts are provided by Cys-316 and Cys-319. Residues 376 to 491 (INKEPTIIDV…WREQIDPDWP (116 aa)) enclose the Rhodanese domain. The active-site Cysteine persulfide intermediate; for sulfurtransferase activity is Cys-446.

In the N-terminal section; belongs to the HesA/MoeB/ThiF family. UBA4 subfamily. It depends on Zn(2+) as a cofactor.

It is found in the cytoplasm. Its subcellular location is the cytosol. The catalysed reaction is [molybdopterin-synthase sulfur-carrier protein]-C-terminal Gly-Gly + ATP + H(+) = [molybdopterin-synthase sulfur-carrier protein]-C-terminal Gly-Gly-AMP + diphosphate. It carries out the reaction [molybdopterin-synthase sulfur-carrier protein]-C-terminal Gly-Gly-AMP + S-sulfanyl-L-cysteinyl-[cysteine desulfurase] + AH2 = [molybdopterin-synthase sulfur-carrier protein]-C-terminal-Gly-aminoethanethioate + L-cysteinyl-[cysteine desulfurase] + A + AMP + 2 H(+). It participates in tRNA modification; 5-methoxycarbonylmethyl-2-thiouridine-tRNA biosynthesis. The protein operates within cofactor biosynthesis; molybdopterin biosynthesis. Plays a central role in 2-thiolation of mcm(5)S(2)U at tRNA wobble positions of cytosolic tRNA(Lys), tRNA(Glu) and tRNA(Gln). Also essential during biosynthesis of the molybdenum cofactor. Acts by mediating the C-terminal thiocarboxylation of sulfur carriers urm1 and mocs2a. Its N-terminus first activates urm1 and mocs2a as acyl-adenylates (-COAMP), then the persulfide sulfur on the catalytic cysteine is transferred to urm1 and mocs2a to form thiocarboxylation (-COSH) of their C-terminus. The reaction probably involves hydrogen sulfide that is generated from the persulfide intermediate and that acts as a nucleophile towards urm1 and mocs2a. Subsequently, a transient disulfide bond is formed. Does not use thiosulfate as sulfur donor; nfs1 probably acting as a sulfur donor for thiocarboxylation reactions. This Aspergillus fumigatus (strain CBS 144.89 / FGSC A1163 / CEA10) (Neosartorya fumigata) protein is Adenylyltransferase and sulfurtransferase uba4.